The primary structure comprises 561 residues: 4-coumarate--CoA ligase 3 (561 aa).

Residues Ser213, Ser214, Gly215, Thr216, Thr217, and Lys221 each contribute to the ATP site. Residues Tyr263 and Ser267 each coordinate (E)-4-coumaroyl-AMP. Residue Lys284 participates in CoA binding. The segment at Glu286–Gln355 is SBD1. (E)-4-coumaroyl-AMP contacts are provided by Ala333, Gln355, Gly356, Thr360, and Met368. The ATP site is built by Gln355, Gly356, and Thr360. The interval Gly356–Tyr423 is SBD2. 2 residues coordinate ATP: Asp444 and Arg459. (E)-4-coumaroyl-AMP contacts are provided by Lys461 and Lys465. The CoA site is built by Lys467 and Gly468. Lys550 contacts ATP.

This sequence belongs to the ATP-dependent AMP-binding enzyme family. Mg(2+) serves as cofactor. As to expression, preferentially expressed in leaves, flowers and siliques.

It carries out the reaction (E)-4-coumarate + ATP + CoA = (E)-4-coumaroyl-CoA + AMP + diphosphate. It catalyses the reaction (E)-caffeate + ATP + CoA = (E)-caffeoyl-CoA + AMP + diphosphate. The enzyme catalyses (E)-ferulate + ATP + CoA = (E)-feruloyl-CoA + AMP + diphosphate. The catalysed reaction is (E)-4-coumarate + ATP + H(+) = (E)-4-coumaroyl-AMP + diphosphate. It carries out the reaction (E)-4-coumaroyl-AMP + CoA = (E)-4-coumaroyl-CoA + AMP + H(+). It catalyses the reaction (E)-caffeate + ATP + H(+) = (E)-caffeoyl-AMP + diphosphate. The enzyme catalyses (E)-caffeoyl-AMP + CoA = (E)-caffeoyl-CoA + AMP + H(+). The catalysed reaction is (E)-ferulate + ATP + H(+) = (E)-feruloyl-AMP + diphosphate. It carries out the reaction (E)-feruloyl-AMP + CoA = (E)-feruloyl-CoA + AMP + H(+). Its pathway is phytoalexin biosynthesis; 3,4',5-trihydroxystilbene biosynthesis; 3,4',5-trihydroxystilbene from trans-4-coumarate: step 1/2. Functionally, produces CoA thioesters of a variety of hydroxy- and methoxy-substituted cinnamic acids, which are used to synthesize several phenylpropanoid-derived compounds, including anthocyanins, flavonoids, isoflavonoids, coumarins, lignin, suberin and wall-bound phenolics. Follows a two-step reaction mechanism, wherein the carboxylate substrate first undergoes adenylation by ATP, followed by a thioesterification in the presence of CoA to yield the final CoA thioesters. The protein is 4-coumarate--CoA ligase 3 of Arabidopsis thaliana (Mouse-ear cress).